The chain runs to 164 residues: 17.8 kDa class II heat shock protein (164 aa).

Residues 48-164 (DARAMAATPA…KPKTIEVKVA (117 aa)) enclose the sHSP domain.

This sequence belongs to the small heat shock protein (HSP20) family.

The protein localises to the cytoplasm. The sequence is that of 17.8 kDa class II heat shock protein from Zea mays (Maize).